The following is a 485-amino-acid chain: Glutamate mutase epsilon subunit (485 aa).

Residue Arg100 coordinates L-glutamate. Residue Asn123 participates in adenosylcob(III)alamin binding. L-glutamate contacts are provided by residues 149–150 (KH) and Asp171. Pro180, Phe297, Lys326, and Glu330 together coordinate adenosylcob(III)alamin.

Belongs to the methylaspartate mutase GlmE subunit family. In terms of assembly, heterotetramer composed of 2 epsilon subunits (GlmE) and 2 sigma subunits (GlmS). GlmE exists as a homodimer and GlmS as a monomer. Adenosylcob(III)alamin serves as cofactor.

It carries out the reaction (2S,3S)-3-methyl-L-aspartate = L-glutamate. Its pathway is amino-acid degradation; L-glutamate degradation via mesaconate pathway; acetate and pyruvate from L-glutamate: step 1/4. Catalyzes the carbon skeleton rearrangement of L-glutamate to L-threo-3-methylaspartate ((2S,3S)-3-methylaspartate). In Fusobacterium nucleatum subsp. nucleatum (strain ATCC 25586 / DSM 15643 / BCRC 10681 / CIP 101130 / JCM 8532 / KCTC 2640 / LMG 13131 / VPI 4355), this protein is Glutamate mutase epsilon subunit.